The sequence spans 130 residues: Histone H2A type 1-C (130 aa).

Residues 1 to 22 (MSGRGKQGGKARAKAKSRSSRA) form a disordered region. S2 carries the post-translational modification N-acetylserine. S2 carries the phosphoserine; by RPS6KA5 modification. R4 is modified (citrulline; alternate). R4 carries the symmetric dimethylarginine; by PRMT5; alternate modification. 2 positions are modified to N6-(2-hydroxyisobutyryl)lysine; alternate: K6 and K10. Position 6 is an N6-acetyllysine; alternate (K6). Over residues 7–19 (QGGKARAKAKSRS) the composition is skewed to basic residues. An N6-(beta-hydroxybutyryl)lysine; alternate mark is found at K10 and K14. N6-lactoyllysine; alternate is present on K10. K10 carries the N6-succinyllysine; alternate modification. K14 participates in a covalent cross-link: Glycyl lysine isopeptide (Lys-Gly) (interchain with G-Cter in ubiquitin); alternate. A Glycyl lysine isopeptide (Lys-Gly) (interchain with G-Cter in ubiquitin) cross-link involves residue K16. At K37 the chain carries N6-(2-hydroxyisobutyryl)lysine; alternate. The residue at position 37 (K37) is an N6-(beta-hydroxybutyryl)lysine; alternate. K37 carries the N6-crotonyllysine; alternate modification. Residues K75 and K76 each carry the N6-(2-hydroxyisobutyryl)lysine modification. K96 carries the post-translational modification N6-(2-hydroxyisobutyryl)lysine; alternate. K96 bears the N6-(beta-hydroxybutyryl)lysine; alternate mark. K96 is subject to N6-succinyllysine; alternate. Residue K96 is modified to N6-glutaryllysine; alternate. Position 105 is an N5-methylglutamine (Q105). N6-(2-hydroxyisobutyryl)lysine; alternate is present on K119. K119 bears the N6-(beta-hydroxybutyryl)lysine; alternate mark. K119 and K120 each carry N6-crotonyllysine; alternate. K119 and K120 each carry N6-glutaryllysine; alternate. K120 participates in a covalent cross-link: Glycyl lysine isopeptide (Lys-Gly) (interchain with G-Cter in ubiquitin); alternate. T121 carries the post-translational modification Phosphothreonine; by DCAF1. The residue at position 126 (K126) is an N6-crotonyllysine; alternate. K126 carries the N6-glutaryllysine; alternate modification.

This sequence belongs to the histone H2A family. As to quaternary structure, the nucleosome is a histone octamer containing two molecules each of H2A, H2B, H3 and H4 assembled in one H3-H4 heterotetramer and two H2A-H2B heterodimers. The octamer wraps approximately 147 bp of DNA. Post-translationally, deiminated on Arg-4 in granulocytes upon calcium entry. In terms of processing, monoubiquitination of Lys-120 (H2AK119Ub) by RING1, TRIM37 and RNF2/RING2 complex gives a specific tag for epigenetic transcriptional repression and participates in X chromosome inactivation of female mammals. It is involved in the initiation of both imprinted and random X inactivation. Ubiquitinated H2A is enriched in inactive X chromosome chromatin. Ubiquitination of H2A functions downstream of methylation of 'Lys-27' of histone H3 (H3K27me). H2AK119Ub by RNF2/RING2 can also be induced by ultraviolet and may be involved in DNA repair. Monoubiquitination of Lys-120 (H2AK119Ub) by TRIM37 may promote transformation of cells in a number of breast cancers. Following DNA double-strand breaks (DSBs), it is ubiquitinated through 'Lys-63' linkage of ubiquitin moieties by the E2 ligase UBE2N and the E3 ligases RNF8 and RNF168, leading to the recruitment of repair proteins to sites of DNA damage. Ubiquitination at Lys-14 and Lys-16 (H2AK13Ub and H2AK15Ub, respectively) in response to DNA damage is initiated by RNF168 that mediates monoubiquitination at these 2 sites, and 'Lys-63'-linked ubiquitin are then conjugated to monoubiquitin; RNF8 is able to extend 'Lys-63'-linked ubiquitin chains in vitro. Deubiquitinated by USP51 at Lys-14 and Lys-16 (H2AK13Ub and H2AK15Ub, respectively) after damaged DNA is repaired. H2AK119Ub and ionizing radiation-induced 'Lys-63'-linked ubiquitination (H2AK13Ub and H2AK15Ub) are distinct events. Phosphorylation on Ser-2 (H2AS1ph) is enhanced during mitosis. Phosphorylation on Ser-2 by RPS6KA5/MSK1 directly represses transcription. Acetylation of H3 inhibits Ser-2 phosphorylation by RPS6KA5/MSK1. Phosphorylation at Thr-121 (H2AT120ph) by DCAF1 is present in the regulatory region of many tumor suppresor genes and down-regulates their transcription. Post-translationally, glutamine methylation at Gln-105 (H2AQ104me) by FBL is specifically dedicated to polymerase I. It is present at 35S ribosomal DNA locus and impairs binding of the FACT complex. In terms of processing, symmetric dimethylation on Arg-4 by the PRDM1/PRMT5 complex may play a crucial role in the germ-cell lineage. Crotonylation (Kcr) is specifically present in male germ cells and marks testis-specific genes in post-meiotic cells, including X-linked genes that escape sex chromosome inactivation in haploid cells. Crotonylation marks active promoters and enhancers and confers resistance to transcriptional repressors. It is also associated with post-meiotically activated genes on autosomes. Post-translationally, lactylated in macrophages by EP300/P300 by using lactoyl-CoA directly derived from endogenous or exogenous lactate, leading to stimulates gene transcription.

The protein localises to the nucleus. It is found in the chromosome. Core component of nucleosome. Nucleosomes wrap and compact DNA into chromatin, limiting DNA accessibility to the cellular machineries which require DNA as a template. Histones thereby play a central role in transcription regulation, DNA repair, DNA replication and chromosomal stability. DNA accessibility is regulated via a complex set of post-translational modifications of histones, also called histone code, and nucleosome remodeling. This chain is Histone H2A type 1-C, found in Homo sapiens (Human).